A 367-amino-acid chain; its full sequence is Epoxide hydrolase 3 (367 aa).

The helical transmembrane segment at Ala-22–Ile-42 threads the bilayer. The active-site Nucleophile is Asp-180. Catalysis depends on Tyr-288, which acts as the Proton donor. His-344 functions as the Proton acceptor in the catalytic mechanism.

This sequence belongs to the AB hydrolase superfamily. Epoxide hydrolase family. In terms of tissue distribution, predominantly expressed in skin, esophagus, lung and tongue and to a lesser extent in pancreas and eye.

It is found in the microsome membrane. The enzyme catalyses an epoxide + H2O = an ethanediol. The catalysed reaction is 9,10-epoxyoctadecanoate + H2O = 9,10-dihydroxyoctadecanoate. It catalyses the reaction 9,10-epoxy-(12Z)-octadecenoate + H2O = 9,10-dihydroxy-(12Z)-octadecenoate. It carries out the reaction 8,9-epoxy-(5Z,11Z,14Z)-eicosatrienoate + H2O = 8,9-dihydroxy-(5Z,11Z,14Z)-eicosatrienoate. The enzyme catalyses 11,12-epoxy-(5Z,8Z,14Z)-eicosatrienoate + H2O = 11,12-dihydroxy-(5Z,8Z,14Z)-eicosatrienoate. The catalysed reaction is 14,15-epoxy-(5Z,8Z,11Z)-eicosatrienoate + H2O = 14,15-dihydroxy-(5Z,8Z,11Z)-eicosatrienoate. Its activity is regulated as follows. Inhibited by 1-(1-acetylpiperidin-4-yl)-3-(4-(trifl uoromethoxy)phenyl)urea (TPAU), 1-cyclohexyl-3-dodecylurea (CDU), 12-(3-adamantan-1-yl-ureido)-dodecanoic acid (AUDA), 1-((3S, 5S, 7S)-adamantan-1-yl)-3-(5-(2-(2-ethoxyethoxy) ethoxy)pentyl)urea (AEPU) and to a lesser extent by 8-(3-((3S, 5S, 7S)-adamantan-1-yl)ureido) octanoic acid (AUOA). Functionally, catalyzes the hydrolysis of epoxide-containing fatty acids. Active in vitro against epoxyeicosatrienoic acids (EETs) including 8,9-EET, 9,10-EET, 11,12-EET and 14,15-EET and leukotoxin. In Mus musculus (Mouse), this protein is Epoxide hydrolase 3 (Ephx3).